The following is a 250-amino-acid chain: Ribonuclease PH (250 aa).

Phosphate contacts are provided by residues Arg-99 and 137–139 (GTR).

Belongs to the RNase PH family. Homohexameric ring arranged as a trimer of dimers.

It catalyses the reaction tRNA(n+1) + phosphate = tRNA(n) + a ribonucleoside 5'-diphosphate. Its function is as follows. Phosphorolytic 3'-5' exoribonuclease that plays an important role in tRNA 3'-end maturation. Removes nucleotide residues following the 3'-CCA terminus of tRNAs; can also add nucleotides to the ends of RNA molecules by using nucleoside diphosphates as substrates, but this may not be physiologically important. Probably plays a role in initiation of 16S rRNA degradation (leading to ribosome degradation) during starvation. This chain is Ribonuclease PH, found in Bordetella parapertussis (strain 12822 / ATCC BAA-587 / NCTC 13253).